We begin with the raw amino-acid sequence, 62 residues long: Sperm protamine P1 (62 aa).

The disordered stretch occupies residues 1 to 62 (MARYRRHSRS…RYSRRGRRRY (62 aa)).

Belongs to the protamine P1 family. Testis.

Its subcellular location is the nucleus. It is found in the chromosome. Protamines substitute for histones in the chromatin of sperm during the haploid phase of spermatogenesis. They compact sperm DNA into a highly condensed, stable and inactive complex. The chain is Sperm protamine P1 (PRM1) from Neophascogale lorentzii (Long-clawed marsupial mouse).